We begin with the raw amino-acid sequence, 232 residues long: 5'-methylthioadenosine/S-adenosylhomocysteine nucleosidase (232 aa).

Glutamate 12 functions as the Proton acceptor in the catalytic mechanism. Substrate-binding positions include glycine 78, isoleucine 152, and 173 to 174 (ME). Aspartate 197 serves as the catalytic Proton donor.

This sequence belongs to the PNP/UDP phosphorylase family. MtnN subfamily. In terms of assembly, homodimer.

The enzyme catalyses S-adenosyl-L-homocysteine + H2O = S-(5-deoxy-D-ribos-5-yl)-L-homocysteine + adenine. It catalyses the reaction S-methyl-5'-thioadenosine + H2O = 5-(methylsulfanyl)-D-ribose + adenine. The catalysed reaction is 5'-deoxyadenosine + H2O = 5-deoxy-D-ribose + adenine. It functions in the pathway amino-acid biosynthesis; L-methionine biosynthesis via salvage pathway; S-methyl-5-thio-alpha-D-ribose 1-phosphate from S-methyl-5'-thioadenosine (hydrolase route): step 1/2. In terms of biological role, catalyzes the irreversible cleavage of the glycosidic bond in both 5'-methylthioadenosine (MTA) and S-adenosylhomocysteine (SAH/AdoHcy) to adenine and the corresponding thioribose, 5'-methylthioribose and S-ribosylhomocysteine, respectively. Also cleaves 5'-deoxyadenosine, a toxic by-product of radical S-adenosylmethionine (SAM) enzymes, into 5-deoxyribose and adenine. Thus, is required for in vivo function of the radical SAM enzymes biotin synthase and lipoic acid synthase, that are inhibited by 5'-deoxyadenosine accumulation. This is 5'-methylthioadenosine/S-adenosylhomocysteine nucleosidase from Salmonella agona (strain SL483).